The sequence spans 388 residues: UDP-galactose transporter senju (388 aa).

10 consecutive transmembrane segments (helical) span residues 13 to 33 (LTFV…IFVT), 46 to 66 (TVTV…CLYC), 84 to 104 (VLGL…LAFV), 113 to 133 (TYYL…QIIF), 142 to 162 (WISL…FGSF), 202 to 222 (FSLS…AGVY), 236 to 256 (IFVQ…VILL), 276 to 296 (FSVL…SFFL), 309 to 329 (ALEL…PIYM), and 331 to 351 (TALA…SPVV).

This sequence belongs to the nucleotide-sugar transporter family.

It is found in the golgi apparatus membrane. In terms of biological role, UDP-galactose transporter involved in the synthesis of galactose-containing glycans. Plays a role in quiescence of the innate immune response, possibly by regulating glycosylation of the Toll pathway ligand spz. The chain is UDP-galactose transporter senju from Drosophila melanogaster (Fruit fly).